Reading from the N-terminus, the 29-residue chain is HSQGSFTSDYSKYLDSKQAKDFVIWLMNT.

This sequence belongs to the glucagon family.

It localises to the secreted. In terms of biological role, glucagon plays a key role in glucose metabolism and homeostasis. Regulates blood glucose by increasing gluconeogenesis and decreasing glycolysis. This Lampetra fluviatilis (European river lamprey) protein is Glucagon (gcg).